Consider the following 71-residue polypeptide: Small ribosomal subunit protein bS21 (71 aa).

It belongs to the bacterial ribosomal protein bS21 family.

The polypeptide is Small ribosomal subunit protein bS21 (Hydrogenovibrio crunogenus (strain DSM 25203 / XCL-2) (Thiomicrospira crunogena)).